Here is a 279-residue protein sequence, read N- to C-terminus: Dermonecrotic toxin LspiSicTox-betaIE3ii (279 aa).

His5 is a catalytic residue. Mg(2+)-binding residues include Glu25 and Asp27. The Nucleophile role is filled by His41. Disulfide bonds link Cys45/Cys51 and Cys47/Cys190. Asp85 contacts Mg(2+).

Belongs to the arthropod phospholipase D family. Class II subfamily. The cofactor is Mg(2+). As to expression, expressed by the venom gland.

The protein localises to the secreted. The enzyme catalyses an N-(acyl)-sphingosylphosphocholine = an N-(acyl)-sphingosyl-1,3-cyclic phosphate + choline. It carries out the reaction an N-(acyl)-sphingosylphosphoethanolamine = an N-(acyl)-sphingosyl-1,3-cyclic phosphate + ethanolamine. It catalyses the reaction a 1-acyl-sn-glycero-3-phosphocholine = a 1-acyl-sn-glycero-2,3-cyclic phosphate + choline. The catalysed reaction is a 1-acyl-sn-glycero-3-phosphoethanolamine = a 1-acyl-sn-glycero-2,3-cyclic phosphate + ethanolamine. Functionally, dermonecrotic toxins cleave the phosphodiester linkage between the phosphate and headgroup of certain phospholipids (sphingolipid and lysolipid substrates), forming an alcohol (often choline) and a cyclic phosphate. This toxin acts on sphingomyelin (SM). It may also act on ceramide phosphoethanolamine (CPE), lysophosphatidylcholine (LPC) and lysophosphatidylethanolamine (LPE), but not on lysophosphatidylserine (LPS), and lysophosphatidylglycerol (LPG). It acts by transphosphatidylation, releasing exclusively cyclic phosphate products as second products. Induces dermonecrosis, hemolysis, increased vascular permeability, edema, inflammatory response, and platelet aggregation. The sequence is that of Dermonecrotic toxin LspiSicTox-betaIE3ii from Loxosceles spinulosa (Recluse spider).